Here is a 339-residue protein sequence, read N- to C-terminus: Glycerol-3-phosphate dehydrogenase [NAD(P)+] (339 aa).

NADPH contacts are provided by Ser-13, Trp-14, and Lys-108. Sn-glycerol 3-phosphate contacts are provided by Lys-108, Gly-139, and Ser-141. Residue Ala-143 participates in NADPH binding. Residues Lys-194, Asp-247, Ser-257, Arg-258, and Asn-259 each contribute to the sn-glycerol 3-phosphate site. The active-site Proton acceptor is Lys-194. Arg-258 is a binding site for NADPH. NADPH is bound by residues Val-282 and Glu-284.

It belongs to the NAD-dependent glycerol-3-phosphate dehydrogenase family.

It is found in the cytoplasm. The enzyme catalyses sn-glycerol 3-phosphate + NAD(+) = dihydroxyacetone phosphate + NADH + H(+). It catalyses the reaction sn-glycerol 3-phosphate + NADP(+) = dihydroxyacetone phosphate + NADPH + H(+). The protein operates within membrane lipid metabolism; glycerophospholipid metabolism. Functionally, catalyzes the reduction of the glycolytic intermediate dihydroxyacetone phosphate (DHAP) to sn-glycerol 3-phosphate (G3P), the key precursor for phospholipid synthesis. The chain is Glycerol-3-phosphate dehydrogenase [NAD(P)+] from Streptococcus mutans serotype c (strain ATCC 700610 / UA159).